The primary structure comprises 250 residues: Ribonuclease PH (250 aa).

Residues Arg-86 and 124–126 each bind phosphate; that span reads GTR.

Belongs to the RNase PH family. As to quaternary structure, homohexameric ring arranged as a trimer of dimers.

It carries out the reaction tRNA(n+1) + phosphate = tRNA(n) + a ribonucleoside 5'-diphosphate. In terms of biological role, phosphorolytic 3'-5' exoribonuclease that plays an important role in tRNA 3'-end maturation. Removes nucleotide residues following the 3'-CCA terminus of tRNAs; can also add nucleotides to the ends of RNA molecules by using nucleoside diphosphates as substrates, but this may not be physiologically important. Probably plays a role in initiation of 16S rRNA degradation (leading to ribosome degradation) during starvation. The chain is Ribonuclease PH from Shouchella clausii (strain KSM-K16) (Alkalihalobacillus clausii).